Consider the following 585-residue polypeptide: Bifunctional lycopene cyclase/phytoene synthase (585 aa).

Residues 1–243 (MGFDYAIVHV…IVFGQLAFDN (243 aa)) are lycopene beta-cyclase. The next 7 membrane-spanning stretches (helical) occupy residues 3–23 (FDYA…LTLL), 35–55 (KVLF…SYLI), 75–97 (IPLE…YLIL), 123–141 (LAGQ…LRVH), 151–171 (LIVV…YQFI), 173–193 (GLPW…LWLV), and 221–241 (IEEA…QLAF). The interval 250–585 (TFPALFPKPP…AWRTLNKSIA (336 aa)) is phytoene synthase.

This sequence in the N-terminal section; belongs to the lycopene beta-cyclase family. In the C-terminal section; belongs to the phytoene/squalene synthase family.

The protein localises to the membrane. The enzyme catalyses all-trans-lycopene = gamma-carotene. It catalyses the reaction gamma-carotene = all-trans-beta-carotene. The catalysed reaction is 2 (2E,6E,10E)-geranylgeranyl diphosphate = 15-cis-phytoene + 2 diphosphate. Its pathway is carotenoid biosynthesis; beta-carotene biosynthesis. It participates in carotenoid biosynthesis; phytoene biosynthesis; all-trans-phytoene from geranylgeranyl diphosphate: step 1/1. Functionally, bifunctional enzyme that catalyzes the reactions from geranylgeranyl diphosphate to phytoene (phytoene synthase) and lycopene to beta-carotene via the intermediate gamma-carotene (lycopene cyclase). This Phaeosphaeria nodorum (strain SN15 / ATCC MYA-4574 / FGSC 10173) (Glume blotch fungus) protein is Bifunctional lycopene cyclase/phytoene synthase.